The sequence spans 260 residues: MDINRWSLQGMTALVTGGSKGIGYAIVEELVGFGARVHICDIDETLLNECLSGWHAKGFEVSGSICDVSSRPQRVQLMQTVSSLFGAKLNILINNVGKYILKPTLESTAEDFSSLMATNLESAYYISQLAHPLLKASGNGNIVFISSVTGVVSGTSTIYGVTKGALNQLARDLACEWASDNIRANSVAPWVTATSLVQKYLEDEIFAEAMFSRTPLGRACEPREVASLVTFLCLPAASYITGQTICIDGGFTVNGFSYKP.

14 to 38 (LVTGGSKGIGYAIVEELVGFGARVH) provides a ligand contact to NADP(+). Substrate is bound at residue Ser147. The active-site Proton acceptor is Tyr159.

The protein belongs to the short-chain dehydrogenases/reductases (SDR) family. SDR65C subfamily.

This chain is Tropinone reductase homolog At1g07450, found in Arabidopsis thaliana (Mouse-ear cress).